The sequence spans 311 residues: N-acetylmuramic acid 6-phosphate etherase (311 aa).

One can recognise an SIS domain in the interval 64-227 (IYQRLIDNGR…SSGVMIKLGK (164 aa)). The Proton donor role is filled by Glu92. The active site involves Glu123.

The protein belongs to the GCKR-like family. MurNAc-6-P etherase subfamily. As to quaternary structure, homodimer.

It catalyses the reaction N-acetyl-D-muramate 6-phosphate + H2O = N-acetyl-D-glucosamine 6-phosphate + (R)-lactate. It participates in amino-sugar metabolism; N-acetylmuramate degradation. Specifically catalyzes the cleavage of the D-lactyl ether substituent of MurNAc 6-phosphate, producing GlcNAc 6-phosphate and D-lactate. The sequence is that of N-acetylmuramic acid 6-phosphate etherase from Prochlorococcus marinus (strain SARG / CCMP1375 / SS120).